We begin with the raw amino-acid sequence, 370 residues long: Alanine racemase (370 aa).

The Proton acceptor; specific for D-alanine role is filled by K36. K36 bears the N6-(pyridoxal phosphate)lysine mark. R134 serves as a coordination point for substrate. Residue Y265 is the Proton acceptor; specific for L-alanine of the active site. Residue M313 coordinates substrate.

Belongs to the alanine racemase family. The cofactor is pyridoxal 5'-phosphate.

The enzyme catalyses L-alanine = D-alanine. Its pathway is amino-acid biosynthesis; D-alanine biosynthesis; D-alanine from L-alanine: step 1/1. Functionally, catalyzes the interconversion of L-alanine and D-alanine. May also act on other amino acids. The protein is Alanine racemase (alr) of Desulforamulus reducens (strain ATCC BAA-1160 / DSM 100696 / MI-1) (Desulfotomaculum reducens).